A 552-amino-acid polypeptide reads, in one-letter code: Tyrosine-protein kinase Src64B (552 aa).

Residues 95–156 form the SH3 domain; that stretch reads VLKRVVVALY…PLNFVAEERS (62 aa). One can recognise an SH2 domain in the interval 162–259; it reads WFFENVLRKE…GLCHILSRPC (98 aa). The Protein kinase domain maps to 284-537; the sequence is IQLLRKLGRG…TFEFLNHYFE (254 aa). Residues 290–298 and Lys312 contribute to the ATP site; that span reads LGRGNFGEV. The active-site Proton acceptor is Asp404. Tyr434 carries the phosphotyrosine; by autocatalysis modification.

It belongs to the protein kinase superfamily. Tyr protein kinase family. SRC subfamily. In terms of assembly, interacts with hzg. Phosphorylated. As to expression, after the first 8 hours of development, accumulates almost exclusively in neural tissues such as the brain, ventral nerve chord, and eye-antennal disks, and in differentiating smooth muscle.

It catalyses the reaction L-tyrosyl-[protein] + ATP = O-phospho-L-tyrosyl-[protein] + ADP + H(+). Tyrosine-protein kinase that may play a role in the development of neural tissue and smooth muscle. May contribute to tyrosine phosphorylation of Dscam1, a cell surface receptor involved in targeting of growing axons during eye morphogenesis. This Drosophila melanogaster (Fruit fly) protein is Tyrosine-protein kinase Src64B (Src64B).